Consider the following 379-residue polypeptide: Succinyl-diaminopimelate desuccinylase (379 aa).

His-70 provides a ligand contact to Zn(2+). Residue Asp-72 is part of the active site. Zn(2+) is bound at residue Asp-103. Glu-137 serves as the catalytic Proton acceptor. Zn(2+) contacts are provided by Glu-138, Glu-166, and His-352.

Belongs to the peptidase M20A family. DapE subfamily. As to quaternary structure, homodimer. It depends on Zn(2+) as a cofactor. Requires Co(2+) as cofactor.

The catalysed reaction is N-succinyl-(2S,6S)-2,6-diaminopimelate + H2O = (2S,6S)-2,6-diaminopimelate + succinate. The protein operates within amino-acid biosynthesis; L-lysine biosynthesis via DAP pathway; LL-2,6-diaminopimelate from (S)-tetrahydrodipicolinate (succinylase route): step 3/3. Functionally, catalyzes the hydrolysis of N-succinyl-L,L-diaminopimelic acid (SDAP), forming succinate and LL-2,6-diaminopimelate (DAP), an intermediate involved in the bacterial biosynthesis of lysine and meso-diaminopimelic acid, an essential component of bacterial cell walls. The sequence is that of Succinyl-diaminopimelate desuccinylase from Shewanella sp. (strain W3-18-1).